The primary structure comprises 510 residues: Pectinesterase 2 (510 aa).

An N-terminal signal peptide occupies residues 1-19 (MALRILITVSLVLFSLSHT). Asn-110 and Asn-158 each carry an N-linked (GlcNAc...) asparagine glycan. Residues Thr-275 and Gln-305 each coordinate substrate. Asp-328 functions as the Proton donor in the catalytic mechanism. Cysteines 342 and 362 form a disulfide. Asp-349 functions as the Nucleophile in the catalytic mechanism. Residues Asn-371 and Asn-385 are each glycosylated (N-linked (GlcNAc...) asparagine). 2 residues coordinate substrate: Arg-416 and Trp-418.

This sequence in the N-terminal section; belongs to the PMEI family. The protein in the C-terminal section; belongs to the pectinesterase family. In terms of tissue distribution, expressed at low levels in young leaves, young bark, young fruit, mature fruit vesicles, shoots and flower buds, young bark and juice vesicles. In both leaf and fruit abscission zones, and mature leaves, expression was initially undetectable but increased markedly following ethylene treatment.

It is found in the secreted. It localises to the cell wall. It carries out the reaction [(1-&gt;4)-alpha-D-galacturonosyl methyl ester](n) + n H2O = [(1-&gt;4)-alpha-D-galacturonosyl](n) + n methanol + n H(+). Its pathway is glycan metabolism; pectin degradation; 2-dehydro-3-deoxy-D-gluconate from pectin: step 1/5. Acts in the modification of cell walls via demethylesterification of cell wall pectin. This chain is Pectinesterase 2 (PECS-2.1), found in Citrus sinensis (Sweet orange).